Here is a 61-residue protein sequence, read N- to C-terminus: Lens epithelial cell protein LEP503 (61 aa).

The protein is Lens epithelial cell protein LEP503 (Lenep) of Mus musculus (Mouse).